The sequence spans 617 residues: Proline--tRNA ligase (617 aa).

The protein belongs to the class-II aminoacyl-tRNA synthetase family. ProS type 1 subfamily. As to quaternary structure, homodimer.

Its subcellular location is the cytoplasm. It carries out the reaction tRNA(Pro) + L-proline + ATP = L-prolyl-tRNA(Pro) + AMP + diphosphate. Functionally, catalyzes the attachment of proline to tRNA(Pro) in a two-step reaction: proline is first activated by ATP to form Pro-AMP and then transferred to the acceptor end of tRNA(Pro). As ProRS can inadvertently accommodate and process non-cognate amino acids such as alanine and cysteine, to avoid such errors it has two additional distinct editing activities against alanine. One activity is designated as 'pretransfer' editing and involves the tRNA(Pro)-independent hydrolysis of activated Ala-AMP. The other activity is designated 'posttransfer' editing and involves deacylation of mischarged Ala-tRNA(Pro). The misacylated Cys-tRNA(Pro) is not edited by ProRS. This chain is Proline--tRNA ligase, found in Streptococcus pneumoniae (strain 70585).